We begin with the raw amino-acid sequence, 457 residues long: Argininosuccinate lyase (457 aa).

It belongs to the lyase 1 family. Argininosuccinate lyase subfamily.

The protein localises to the cytoplasm. It carries out the reaction 2-(N(omega)-L-arginino)succinate = fumarate + L-arginine. It functions in the pathway amino-acid biosynthesis; L-arginine biosynthesis; L-arginine from L-ornithine and carbamoyl phosphate: step 3/3. This chain is Argininosuccinate lyase, found in Haemophilus influenzae (strain PittGG).